The sequence spans 267 residues: Phosphate import ATP-binding protein PstB 2 (267 aa).

The 242-residue stretch at 21 to 262 (LSTKDLHVYY…AKLQSTSDYV (242 aa)) folds into the ABC transporter domain. ATP is bound at residue 53 to 60 (GPSGCGKS).

Belongs to the ABC transporter superfamily. Phosphate importer (TC 3.A.1.7) family. As to quaternary structure, the complex is composed of two ATP-binding proteins (PstB), two transmembrane proteins (PstC and PstA) and a solute-binding protein (PstS).

The protein localises to the cell membrane. The catalysed reaction is phosphate(out) + ATP + H2O = ADP + 2 phosphate(in) + H(+). Functionally, part of the ABC transporter complex PstSACB involved in phosphate import. Responsible for energy coupling to the transport system. The protein is Phosphate import ATP-binding protein PstB 2 of Streptococcus mutans serotype c (strain ATCC 700610 / UA159).